Consider the following 324-residue polypeptide: THUMP domain-containing protein 1 homolog (324 aa).

Disordered regions lie at residues 1–24 (MEPASKKSKMGKNVKFNNNKKKYF) and 67–104 (SEKPENEPEKKQPEEGAGGDAGEDDPKPAAGGTSDDDD). Residues 68 to 80 (EKPENEPEKKQPE) show a composition bias toward basic and acidic residues. Position 99 is a phosphothreonine (Thr-99). Ser-100 carries the phosphoserine modification. Positions 154–260 (DIATTGKSMS…RGWCLLSVID (107 aa)) constitute a THUMP domain. The disordered stretch occupies residues 275 to 324 (NPSDKKSSGEGDSKSETSEVANGNDKEQAESSEESKSNDDENKDSTENDK). Composition is skewed to basic and acidic residues over residues 277 to 291 (SDKKSSGEGDSKSET) and 298 to 324 (NDKEQAESSEESKSNDDENKDSTENDK).

This sequence belongs to the THUMPD1 family.

The chain is THUMP domain-containing protein 1 homolog from Drosophila melanogaster (Fruit fly).